Consider the following 402-residue polypeptide: Phosphoglycerate kinase (402 aa).

Substrate is bound by residues 21-23, Arg-36, 59-62, Arg-114, and Arg-147; these read DLN and HLGR. Residues Lys-202, Glu-329, and 355 to 358 each bind ATP; that span reads GGDT.

This sequence belongs to the phosphoglycerate kinase family. As to quaternary structure, monomer.

The protein localises to the cytoplasm. It catalyses the reaction (2R)-3-phosphoglycerate + ATP = (2R)-3-phospho-glyceroyl phosphate + ADP. It functions in the pathway carbohydrate degradation; glycolysis; pyruvate from D-glyceraldehyde 3-phosphate: step 2/5. The sequence is that of Phosphoglycerate kinase from Psychrobacter sp. (strain PRwf-1).